A 196-amino-acid chain; its full sequence is Carnitine operon protein CaiE (196 aa).

The interval 173–196 is disordered; it reads TQPLRQMEENRPRLQGTTDVTPKR. Positions 187–196 are enriched in polar residues; the sequence is QGTTDVTPKR.

This sequence belongs to the transferase hexapeptide repeat family.

Its pathway is amine and polyamine metabolism; carnitine metabolism. In terms of biological role, overproduction of CaiE stimulates the activity of CaiB and CaiD. This Escherichia coli O139:H28 (strain E24377A / ETEC) protein is Carnitine operon protein CaiE.